We begin with the raw amino-acid sequence, 117 residues long: Immunoglobulin heavy variable 3-11 (117 aa).

Positions 1–19 (MEFGLSWVFLVAIIKGVQC) are cleaved as a signal peptide. The residue at position 20 (Q20) is a Pyrrolidone carboxylic acid. The framework-1 stretch occupies residues 20–44 (QVQLVESGGGLVKPGGSLRLSCAAS). An Ig-like domain is found at 20 to 117 (QVQLVESGGG…EDTAVYYCAR (98 aa)). Cysteines 41 and 115 form a disulfide. Residues 45–52 (GFTFSDYY) are complementarity-determining-1. The framework-2 stretch occupies residues 53 to 69 (MSWIRQAPGKGLEWVSY). Residues 70–77 (ISSSSSYT) form a complementarity-determining-2 region. The interval 78 to 115 (NYADSVKGRFTISRDNAKNSLYLQMNSLRAEDTAVYYC) is framework-3. Residues 116–117 (AR) form a complementarity-determining-3 region.

As to quaternary structure, immunoglobulins are composed of two identical heavy chains and two identical light chains; disulfide-linked.

Its subcellular location is the secreted. The protein resides in the cell membrane. In terms of biological role, v region of the variable domain of immunoglobulin heavy chains that participates in the antigen recognition. Immunoglobulins, also known as antibodies, are membrane-bound or secreted glycoproteins produced by B lymphocytes. In the recognition phase of humoral immunity, the membrane-bound immunoglobulins serve as receptors which, upon binding of a specific antigen, trigger the clonal expansion and differentiation of B lymphocytes into immunoglobulins-secreting plasma cells. Secreted immunoglobulins mediate the effector phase of humoral immunity, which results in the elimination of bound antigens. The antigen binding site is formed by the variable domain of one heavy chain, together with that of its associated light chain. Thus, each immunoglobulin has two antigen binding sites with remarkable affinity for a particular antigen. The variable domains are assembled by a process called V-(D)-J rearrangement and can then be subjected to somatic hypermutations which, after exposure to antigen and selection, allow affinity maturation for a particular antigen. This Homo sapiens (Human) protein is Immunoglobulin heavy variable 3-11.